Consider the following 312-residue polypeptide: CD-NTase-associated protein 12 (312 aa).

The TIR domain maps to 5-127 (RLFIGSSSEE…FNGLTLARFD (123 aa)).

It in the C-terminal section; belongs to the bacterial STING family. In terms of assembly, forms homodimers; in the presence of c-di-GMP forms filaments with an ordered array of parallel-stacked subunits.

The enzyme catalyses NAD(+) + H2O = ADP-D-ribose + nicotinamide + H(+). With respect to regulation, NAD(+) hydrolase activity is strongly stimulated by c-di-GMP, weakly by 3'3'-cGAMP, very weakly by c-di-AMP but not at all by 2'3'-cGAMP. Self-association of TIR domains is required for NADase activity. Functionally, effector protein of a CBASS antiviral system with NAD(+) hydrolase activity. CBASS (cyclic oligonucleotide-based antiphage signaling system) provides immunity against bacteriophage. The CD-NTase protein synthesizes cyclic nucleotides in response to infection; these serve as specific second messenger signals. The signals activate a diverse range of effectors, leading to bacterial cell death and thus abortive phage infection. A type I-D CBASS(GG) system. Its function is as follows. Binds c-di-GMP, does not bind cUMP-AMP. Upon activation by c-di-GMP forms filaments which hydrolyze NAD(+); filament formation is required for enzyme activation. In Niabella drilacis (strain DSM 25811 / CCM 8410 / CCUG 62505 / LMG 26954 / E90), this protein is CD-NTase-associated protein 12.